Reading from the N-terminus, the 1295-residue chain is Serine protease pet autotransporter (1295 aa).

An N-terminal signal peptide occupies residues M1–A52. The 251-residue stretch at N54–E304 folds into the Peptidase S6 domain. Catalysis depends on charge relay system residues H124, D153, and S260. Residues D1029–F1295 enclose the Autotransporter domain.

In terms of processing, cleaved to release the mature protein from the outer membrane.

The protein localises to the periplasm. It is found in the secreted. Its subcellular location is the cell surface. The protein resides in the cell outer membrane. Inhibition of cytotoxic activity by phenylmethylsulfonyl fluoride. Functionally, serine protease with enterotoxic and cytotoxic activity. Internalization into the host cell is required for the induction of cytopathic effects. However, the serine activity is not necessary for secretion and internalization into the host cell. The sequence is that of Serine protease pet autotransporter (pet) from Escherichia coli O44:H18 (strain 042 / EAEC).